Reading from the N-terminus, the 298-residue chain is Iron-regulated virulence regulatory protein IrgB (298 aa).

The region spanning 1 to 59 is the HTH lysR-type domain; it reads MQDLSAVKAFHALCQHKSLTAAAKALEQPKSTLSRRLAQLEEDLGQSLLMRQGNRLTLT. The segment at residues 19 to 38 is a DNA-binding region (H-T-H motif); that stretch reads LTAAAKALEQPKSTLSRRLA.

The protein belongs to the LysR transcriptional regulatory family.

Its function is as follows. Transcription activation of the irgA gene. In the presence of sufficient iron, transcription of both irgA and irgB is negatively regulated by a fur-like protein. In low iron conditions, negative regulation of transcription is removed, and production of irgB leads to positive transcriptional activation of irgA. This is Iron-regulated virulence regulatory protein IrgB (irgB) from Vibrio cholerae serotype O1 (strain ATCC 39315 / El Tor Inaba N16961).